Reading from the N-terminus, the 543-residue chain is Phosphoenolpyruvate carboxykinase (ATP) (543 aa).

244 to 251 contacts ATP; that stretch reads GLSGTGKT.

It belongs to the phosphoenolpyruvate carboxykinase (ATP) family.

The enzyme catalyses oxaloacetate + ATP = phosphoenolpyruvate + ADP + CO2. It participates in carbohydrate biosynthesis; gluconeogenesis. The chain is Phosphoenolpyruvate carboxykinase (ATP) (PCK1) from Kluyveromyces lactis (strain ATCC 8585 / CBS 2359 / DSM 70799 / NBRC 1267 / NRRL Y-1140 / WM37) (Yeast).